A 177-amino-acid chain; its full sequence is Large ribosomal subunit protein uL6 (177 aa).

It belongs to the universal ribosomal protein uL6 family. In terms of assembly, part of the 50S ribosomal subunit.

This protein binds to the 23S rRNA, and is important in its secondary structure. It is located near the subunit interface in the base of the L7/L12 stalk, and near the tRNA binding site of the peptidyltransferase center. This chain is Large ribosomal subunit protein uL6, found in Pseudomonas paraeruginosa (strain DSM 24068 / PA7) (Pseudomonas aeruginosa (strain PA7)).